Reading from the N-terminus, the 346-residue chain is Fe(3+) ions import ATP-binding protein FbpC 3 (346 aa).

In terms of domain architecture, ABC transporter spans 5–235 (LEVDGVDKSF…PIDVATAEFI (231 aa)). 37-44 (GPSGCGKT) is a binding site for ATP.

Belongs to the ABC transporter superfamily. Fe(3+) ion importer (TC 3.A.1.10) family. As to quaternary structure, the complex is composed of two ATP-binding proteins (FbpC), two transmembrane proteins (FbpB) and a solute-binding protein (FbpA).

The protein localises to the cell membrane. The enzyme catalyses Fe(3+)(out) + ATP + H2O = Fe(3+)(in) + ADP + phosphate + H(+). In terms of biological role, part of the ABC transporter complex FbpABC involved in Fe(3+) ions import. Responsible for energy coupling to the transport system. This is Fe(3+) ions import ATP-binding protein FbpC 3 from Rhodococcus jostii (strain RHA1).